Reading from the N-terminus, the 126-residue chain is Histone H2B-alpha (126 aa).

The segment at 1-34 is disordered; sequence MSAAEKKPASKAPAGKAPRDTMKSADKKRGKNRK. 2 positions are modified to N6-acetyllysine; alternate: Lys6 and Lys7. Residues Lys6 and Lys7 each participate in a glycyl lysine isopeptide (Lys-Gly) (interchain with G-Cter in SUMO); alternate cross-link. Position 10 is a phosphoserine (Ser10). The residue at position 11 (Lys11) is an N6-acetyllysine. Positions 17 to 27 are enriched in basic and acidic residues; sequence APRDTMKSADK. A Glycyl lysine isopeptide (Lys-Gly) (interchain with G-Cter in ubiquitin) cross-link involves residue Lys120.

The protein belongs to the histone H2B family. The nucleosome is a histone octamer containing two molecules each of H2A, H2B, H3 and H4 assembled in one H3-H4 heterotetramer and two H2A-H2B heterodimers. The octamer wraps approximately 147 bp of DNA. Interacts with rik1. In terms of processing, monoubiquitinated by the rhp6/ubc2-bre1 complex to form H2BK123ub1. H2BK123ub1 gives a specific tag for epigenetic transcriptional activation and is also prerequisite for H3K4me and H3K79me formation. H2BK123ub1 also modulates the formation of double-strand breaks during meiosis and is a prerequisite for DNA-damage checkpoint activation. Post-translationally, phosphorylated by shk1 to form H2BS10ph during progression through meiotic prophase. May be correlated with chromosome condensation. Acetylation of N-terminal lysines and particularly formation of H2BK11ac has a positive effect on transcription. In terms of processing, sumoylation to form H2BK6su or H2BK7su occurs preferentially near the telomeres and represses gene transcription.

Its subcellular location is the nucleus. The protein localises to the chromosome. Functionally, core component of nucleosome. Nucleosomes wrap and compact DNA into chromatin, limiting DNA accessibility to the cellular machineries which require DNA as a template. Histones thereby play a central role in transcription regulation, DNA repair, DNA replication and chromosomal stability. DNA accessibility is regulated via a complex set of post-translational modifications of histones, also called histone code, and nucleosome remodeling. The polypeptide is Histone H2B-alpha (htb1) (Schizosaccharomyces pombe (strain 972 / ATCC 24843) (Fission yeast)).